The sequence spans 345 residues: tRNA pseudouridine synthase B (345 aa).

Aspartate 39 serves as the catalytic Nucleophile.

The protein belongs to the pseudouridine synthase TruB family. Type 1 subfamily.

The catalysed reaction is uridine(55) in tRNA = pseudouridine(55) in tRNA. Its function is as follows. Responsible for synthesis of pseudouridine from uracil-55 in the psi GC loop of transfer RNAs. This chain is tRNA pseudouridine synthase B, found in Rickettsia africae (strain ESF-5).